Here is a 167-residue protein sequence, read N- to C-terminus: Ubiquitin-conjugating enzyme E2 2 (167 aa).

A UBC core domain is found at 4–150 (PARRRLMRDF…VKETVEKSWE (147 aa)). The Glycyl thioester intermediate role is filled by Cys88. Residues 148 to 167 (SWEDNMDDMDDSDEDDEDDE) form a disordered region. Acidic residues predominate over residues 151-167 (DNMDDMDDSDEDDEDDE).

This sequence belongs to the ubiquitin-conjugating enzyme family.

The protein localises to the cytoplasm. It localises to the nucleus. The catalysed reaction is S-ubiquitinyl-[E1 ubiquitin-activating enzyme]-L-cysteine + [E2 ubiquitin-conjugating enzyme]-L-cysteine = [E1 ubiquitin-activating enzyme]-L-cysteine + S-ubiquitinyl-[E2 ubiquitin-conjugating enzyme]-L-cysteine.. The protein operates within protein modification; protein ubiquitination. Catalyzes the covalent attachment of ubiquitin to other proteins. Plays a role in transcription regulation by catalyzing the monoubiquitination of histone H2B to form H2BK123ub1. H2BK123ub1 gives a specific tag for epigenetic transcriptional activation and is also a prerequisite for H3K4me and H3K79me formation. Also involved in postreplication repair of UV-damaged DNA, in N-end rule-dependent protein degradation and in sporulation. This chain is Ubiquitin-conjugating enzyme E2 2 (UBC2), found in Candida glabrata (strain ATCC 2001 / BCRC 20586 / JCM 3761 / NBRC 0622 / NRRL Y-65 / CBS 138) (Yeast).